Consider the following 247-residue polypeptide: 3-deoxy-manno-octulosonate cytidylyltransferase (247 aa).

The protein belongs to the KdsB family.

The protein resides in the cytoplasm. It catalyses the reaction 3-deoxy-alpha-D-manno-oct-2-ulosonate + CTP = CMP-3-deoxy-beta-D-manno-octulosonate + diphosphate. Its pathway is nucleotide-sugar biosynthesis; CMP-3-deoxy-D-manno-octulosonate biosynthesis; CMP-3-deoxy-D-manno-octulosonate from 3-deoxy-D-manno-octulosonate and CTP: step 1/1. It participates in bacterial outer membrane biogenesis; lipopolysaccharide biosynthesis. In terms of biological role, activates KDO (a required 8-carbon sugar) for incorporation into bacterial lipopolysaccharide in Gram-negative bacteria. This Bdellovibrio bacteriovorus (strain ATCC 15356 / DSM 50701 / NCIMB 9529 / HD100) protein is 3-deoxy-manno-octulosonate cytidylyltransferase.